We begin with the raw amino-acid sequence, 543 residues long: Biotinidase (543 aa).

The signal sequence occupies residues Met1–Gly41. A CN hydrolase domain is found at Asn72–Thr351. Glu112 serves as the catalytic Proton acceptor. A glycan (N-linked (GlcNAc...) asparagine) is linked at Asn119. Asn150 is a glycosylation site (N-linked (GlcNAc...) (complex) asparagine). Asn203 carries N-linked (GlcNAc...) asparagine glycosylation. Catalysis depends on Lys212, which acts as the Proton donor. The Nucleophile role is filled by Cys245. Residues Asn349, Asn402, and Asn489 are each glycosylated (N-linked (GlcNAc...) asparagine).

The protein belongs to the carbon-nitrogen hydrolase superfamily. BTD/VNN family.

The protein resides in the secreted. It localises to the extracellular space. The catalysed reaction is biocytin + H2O = biotin + L-lysine. It catalyses the reaction biotin amide + H2O = biotin + NH4(+). Functionally, catalytic release of biotin from biocytin, the product of biotin-dependent carboxylases degradation. The chain is Biotinidase from Homo sapiens (Human).